An 899-amino-acid chain; its full sequence is Inositol 1,4,5-triphosphate receptor associated 1 (899 aa).

Disordered regions lie at residues 32–110 (PGTH…HRHL), 164–286 (RRGR…PLQH), 324–391 (KTAR…EEPG), and 463–486 (AAEQ…SKSG). The span at 100 to 110 (SPHRRLSHRHL) shows a compositional bias: basic residues. Serine 106 carries the post-translational modification Phosphoserine. The tract at residues 140–172 (SEEDKKKNLALLEEAKLVSERFLTRRGRKSRSS) is interaction with PRKG1. Residues 171–180 (SSLGDSPSAV) are compositionally biased toward polar residues. Positions 181–203 (SPNLSSGASPASSRSCSLTISTS) are enriched in low complexity. Over residues 266–281 (TVEKTKELTVEQKENF) the composition is skewed to basic and acidic residues. Residues 333–351 (PRTTAQGSGGTVSPHSLGQ) show a composition bias toward polar residues. At serine 382 the chain carries Phosphoserine. An interaction with ITPR1 region spans residues 521 to 567 (NVFVQLSLAFRNDSYTLESRINQAERERNLTEENTEKELENFKASIT). Residues 534–632 (SYTLESRINQ…MQYVENLKRT (99 aa)) are a coiled coil. A phosphoserine mark is found at serine 670 and serine 683. 2 disordered regions span residues 695 to 722 (LPGQ…SSIS) and 757 to 818 (TSQE…DQGS). The segment covering 699 to 715 (APSSSPMPSLPALSESS) has biased composition (low complexity). Composition is skewed to basic and acidic residues over residues 759–770 (QETKAKAEEEAY) and 777–787 (GVKKTEELQDL). Residues 788–814 (KEEEEEEQKTESPEEPEEVEETQEDEK) are compositionally biased toward acidic residues. A helical transmembrane segment spans residues 839 to 859 (WQVIWMMAAVMLVLSVVLGLY). The tract at residues 867 to 899 (EEADGPPGRSTCSAAQRDSWWSSGLQQELPAEQ) is disordered. Positions 876–892 (STCSAAQRDSWWSSGLQ) are enriched in polar residues.

Part of cGMP kinase signaling complex at least composed of ACTA2/alpha-actin, CNN1/calponin H1, PLN/phospholamban, PRKG1 and ITPR1. Interacts with PRKG1/cGKI-beta and ITPR1/IP3R type I. Interacts with HCN4; regulates HCN4 channel activity. Phosphorylated by PRKG1/cGKI. In terms of tissue distribution, highly expressed in smooth muscle such as aorta, colon and uterus. Detected in the brain, in the thalamus, in the hippocampus and myenteric plexus. Highly expressed in megakaryocytes. Down-regulated during macrophage differentiation.

The protein resides in the membrane. It is found in the cytoplasm. Its subcellular location is the perinuclear region. The protein localises to the sarcoplasmic reticulum. Its function is as follows. Plays a role as NO/PRKG1-dependent regulator of IP3-induced calcium release; its phosphorylation by PRKG1 inhibits bradykinin and IP3-induced calcium release from intracellular stores. Recruits PRKG1 to the endoplasmic reticulum and may mediate the assembly of PRKG1 and ITPR1 in a macrocomplex. Involved in PRKG1 signaling cascade leading to inhibition of platelet activation and aggregation. Also mediates NO-dependent inhibition of calcium signaling in gastrointestinal smooth muscle contributing to NO-dependent relaxation. Plays a role in the regulation of cellular excitability by regulating the hyperpolarization-activated cyclic nucleotide-gated HCN4 channel activity. The polypeptide is Inositol 1,4,5-triphosphate receptor associated 1 (Irag1) (Mus musculus (Mouse)).